Here is a 150-residue protein sequence, read N- to C-terminus: uncharacterized protein (150 aa).

In terms of domain architecture, Flavodoxin-like spans 4–148 (LILYKSIHHK…KAKEFAKSIL (145 aa)).

This is an uncharacterized protein from Methanocaldococcus jannaschii (strain ATCC 43067 / DSM 2661 / JAL-1 / JCM 10045 / NBRC 100440) (Methanococcus jannaschii).